The chain runs to 100 residues: C-X-C motif chemokine 3 (100 aa).

A signal peptide spans 1–31 (MAPPTCRLLSAALVLLLLLATNHQATGAVVA). 2 cysteine pairs are disulfide-bonded: Cys36-Cys62 and Cys38-Cys78.

It belongs to the intercrine alpha (chemokine CxC) family.

The protein localises to the secreted. Ligand for CXCR2. Has chemotactic activity for neutrophils. May play a role in inflammation and exert its effects on endothelial cells in an autocrine fashion. The sequence is that of C-X-C motif chemokine 3 from Mus musculus (Mouse).